Reading from the N-terminus, the 511-residue chain is Potassium voltage-gated channel subfamily A member 10 (511 aa).

The interval 25-44 is disordered; sequence EPGYATDFDPTSSKGRPGSS. The chain crosses the membrane as a helical span at residues 218–238; it reads VAVVSVLVVVISITIFCLETL. The helical transmembrane segment at 271-292 threads the bilayer; the sequence is FFMVESTCIVWFTFELVLRFVV. A lipid anchor (S-palmitoyl cysteine) is attached at Cys293. Residues 303–323 traverse the membrane as a helical segment; the sequence is IMNIIDIISIIPYFATLITEL. A helical; Voltage-sensor membrane pass occupies residues 339–358; the sequence is ILRIIRLVRVFRIFKLSRHS. Residues 375–395 traverse the membrane as a helical segment; sequence LGLLIFFLFIGVILFSSAVYF. The Selectivity filter motif lies at 421-426; sequence TVGYGD. The helical transmembrane segment at 436 to 456 threads the bilayer; sequence IVGTLCAIAGVLTIALPVPVI. The segment at 489–511 is disordered; it reads SRMGSTESLNKTNGSCSAEKSRK.

This sequence belongs to the potassium channel family. A (Shaker) (TC 1.A.1.2) subfamily. Kv1.8/KCNA10 sub-subfamily. Homotetramer. Interacts with KCN4B/POMP. Interaction with KCN4B/POMP is necessary for the modulation of channel activity by cAMP. As to expression, expressed strongly in the inner ear and weakly in skeletal muscle. Not detected in other tissues.

Its subcellular location is the membrane. It catalyses the reaction K(+)(in) = K(+)(out). With respect to regulation, the channel activity is up-regulated by cAMP. Its function is as follows. Voltage-gated potassium ion channel that mediates K(+) permeability of excitable membranes. When opened in response to the voltage difference across the membrane, KCNA10 channel selectively allows the flow of potassium ions across the membrane down their electrochemical gradient. This is Potassium voltage-gated channel subfamily A member 10 from Mus musculus (Mouse).